An 86-amino-acid chain; its full sequence is Sec-independent protein translocase protein TatA (86 aa).

Residues 1-21 (MGISIWQLLIILAIVLVLFGA) form a helical membrane-spanning segment.

This sequence belongs to the TatA/E family. In terms of assembly, the Tat system comprises two distinct complexes: a TatABC complex, containing multiple copies of TatA, TatB and TatC subunits, and a separate TatA complex, containing only TatA subunits. Substrates initially bind to the TatABC complex, which probably triggers association of the separate TatA complex to form the active translocon.

Its subcellular location is the cell inner membrane. Part of the twin-arginine translocation (Tat) system that transports large folded proteins containing a characteristic twin-arginine motif in their signal peptide across membranes. TatA could form the protein-conducting channel of the Tat system. The chain is Sec-independent protein translocase protein TatA from Hydrogenovibrio crunogenus (strain DSM 25203 / XCL-2) (Thiomicrospira crunogena).